The primary structure comprises 339 residues: Arylacetonitrilase (339 aa).

Positions 5–290 (IRVAVTQAEP…EGIVYADLDL (286 aa)) constitute a CN hydrolase domain. The Proton acceptor role is filled by Glu45. Residue Lys126 is part of the active site. Catalysis depends on Cys167, which acts as the Nucleophile.

It belongs to the carbon-nitrogen hydrolase superfamily. Nitrilase family.

The catalysed reaction is a nitrile + 2 H2O = a carboxylate + NH4(+). The enzyme catalyses 4-chlorophenylacetonitrile + 2 H2O = 4-chlorophenylacetate + NH4(+). Functionally, nitrilase that hydrolyzes preferentially phenylacetonitrile, (R,S)-mandelonitrile, and 3-indolylacetonitrile. In Fusarium vanettenii (strain ATCC MYA-4622 / CBS 123669 / FGSC 9596 / NRRL 45880 / 77-13-4) (Fusarium solani subsp. pisi), this protein is Arylacetonitrilase.